The chain runs to 126 residues: Glycine cleavage system H protein (126 aa).

Residues 22–104 enclose the Lipoyl-binding domain; the sequence is TVTIGITEYA…YEKAWMVKVE (83 aa). N6-lipoyllysine is present on lysine 63.

Belongs to the GcvH family. The glycine cleavage system is composed of four proteins: P, T, L and H. (R)-lipoate serves as cofactor.

Functionally, the glycine cleavage system catalyzes the degradation of glycine. The H protein shuttles the methylamine group of glycine from the P protein to the T protein. Is also involved in protein lipoylation via its role as an octanoyl/lipoyl carrier protein intermediate. The chain is Glycine cleavage system H protein from Staphylococcus saprophyticus subsp. saprophyticus (strain ATCC 15305 / DSM 20229 / NCIMB 8711 / NCTC 7292 / S-41).